Reading from the N-terminus, the 63-residue chain is Large ribosomal subunit protein bL28 (63 aa).

It belongs to the bacterial ribosomal protein bL28 family.

This chain is Large ribosomal subunit protein bL28, found in Brachyspira hyodysenteriae (strain ATCC 49526 / WA1).